Here is a 156-residue protein sequence, read N- to C-terminus: MDKIPMTRAGFTALDDELKTLKTVERPAVIRSIAEAREHGDLSENAEYHAAREKQSFIEGRIKELEAILSLAEVIDPAKLSGSIKFGATVTILDEETEEERTYQIVGEAEADIEAGLLNIKSPLARALIGKDEGDSIEVKTPGGERGYEVVSVRFV.

A coiled-coil region spans residues 46-67; sequence AEYHAAREKQSFIEGRIKELEA.

Belongs to the GreA/GreB family.

Necessary for efficient RNA polymerase transcription elongation past template-encoded arresting sites. The arresting sites in DNA have the property of trapping a certain fraction of elongating RNA polymerases that pass through, resulting in locked ternary complexes. Cleavage of the nascent transcript by cleavage factors such as GreA or GreB allows the resumption of elongation from the new 3'terminus. GreA releases sequences of 2 to 3 nucleotides. The sequence is that of Transcription elongation factor GreA from Cereibacter sphaeroides (strain ATCC 17029 / ATH 2.4.9) (Rhodobacter sphaeroides).